A 281-amino-acid chain; its full sequence is Large ribosomal subunit protein uL2 (281 aa).

The tract at residues 222-281 is disordered; the sequence is TVRGSVMNPNDHPHGGGEGRTPIGRKSPVTPWGKKALGVKTRNTKKPSEKLIVRKRNAKK.

This sequence belongs to the universal ribosomal protein uL2 family. In terms of assembly, part of the 50S ribosomal subunit. Forms a bridge to the 30S subunit in the 70S ribosome.

Functionally, one of the primary rRNA binding proteins. Required for association of the 30S and 50S subunits to form the 70S ribosome, for tRNA binding and peptide bond formation. It has been suggested to have peptidyltransferase activity; this is somewhat controversial. Makes several contacts with the 16S rRNA in the 70S ribosome. The polypeptide is Large ribosomal subunit protein uL2 (Mesoplasma florum (strain ATCC 33453 / NBRC 100688 / NCTC 11704 / L1) (Acholeplasma florum)).